The following is a 784-amino-acid chain: Toll-like receptor 2 (784 aa).

The N-terminal stretch at methionine 1–glycine 20 is a signal peptide. Residues alanine 21–arginine 587 are Extracellular-facing. An intrachain disulfide couples cysteine 30 to cysteine 36. LRR repeat units lie at residues valine 54–asparagine 77, leucine 78–asparagine 101, leucine 102–valine 125, leucine 126–asparagine 150, leucine 151–phenylalanine 175, leucine 176–asparagine 199, isoleucine 200–serine 223, leucine 224–serine 250, valine 251–glycine 278, isoleucine 279–asparagine 308, valine 309–lysine 337, valine 338–serine 361, leucine 362–phenylalanine 388, leucine 389–asparagine 414, leucine 415–lysine 437, methionine 438–glutamine 457, threonine 458–glutamine 478, leucine 479–valine 500, and leucine 501–glutamine 524. N-linked (GlcNAc...) asparagine glycosylation occurs at asparagine 114. Residue asparagine 199 is glycosylated (N-linked (GlcNAc...) asparagine). Cysteine 353 and cysteine 382 are disulfide-bonded. A disulfide bridge connects residues cysteine 432 and cysteine 454. Asparagine 442 carries N-linked (GlcNAc...) asparagine glycosylation. Positions leucine 525 to arginine 579 constitute an LRRCT domain. Residues alanine 588 to leucine 608 form a helical membrane-spanning segment. The Cytoplasmic segment spans residues cysteine 609 to serine 784. One can recognise a TIR domain in the interval isoleucine 639 to isoleucine 782. Lysine 754 participates in a covalent cross-link: Glycyl lysine isopeptide (Lys-Gly) (interchain with G-Cter in ubiquitin). The ATG16L1-binding motif signature appears at tyrosine 761–leucine 778.

It belongs to the Toll-like receptor family. As to quaternary structure, interacts with LY96, TLR1 and TLR6 (via extracellular domain). TLR2 seems to exist in heterodimers with either TLR1 or TLR6 before stimulation by the ligand. The heterodimers form bigger oligomers in response to their corresponding ligands as well as further heterotypic associations with other receptors such as CD14 and/or CD36. Binds MYD88 (via TIR domain). Interacts with TICAM1. Interacts with CNPY3. Interacts with ATG16L1. Interacts with PPP1R11. Interacts with TICAM2. Interacts with TIRAP. In terms of processing, ubiquitinated at Lys-754 by PPP1R11, leading to its degradation. Deubiquitinated by USP2. Glycosylation of Asn-442 is critical for secretion of the N-terminal ectodomain of TLR2.

Its subcellular location is the membrane. It is found in the cytoplasmic vesicle. It localises to the phagosome membrane. The protein localises to the membrane raft. Cooperates with LY96 to mediate the innate immune response to bacterial lipoproteins and other microbial cell wall components. Cooperates with TLR1 or TLR6 to mediate the innate immune response to bacterial lipoproteins or lipopeptides. Acts via MYD88 and TRAF6, leading to NF-kappa-B activation, cytokine secretion and the inflammatory response. May also promote apoptosis in response to lipoproteins. Forms activation clusters composed of several receptors depending on the ligand, these clusters trigger signaling from the cell surface and subsequently are targeted to the Golgi in a lipid-raft dependent pathway. Forms the cluster TLR2:TLR6:CD14:CD36 in response to diacylated lipopeptides and TLR2:TLR1:CD14 in response to triacylated lipopeptides. This chain is Toll-like receptor 2 (TLR2), found in Bison bison (American bison).